The primary structure comprises 246 residues: tRNA pseudouridine synthase A (246 aa).

Residue Asp52 is the Nucleophile of the active site. Tyr111 contacts substrate.

The protein belongs to the tRNA pseudouridine synthase TruA family. Homodimer.

The enzyme catalyses uridine(38/39/40) in tRNA = pseudouridine(38/39/40) in tRNA. Formation of pseudouridine at positions 38, 39 and 40 in the anticodon stem and loop of transfer RNAs. The chain is tRNA pseudouridine synthase A from Borreliella afzelii (strain PKo) (Borrelia afzelii).